The chain runs to 942 residues: Lon protease homolog 4, chloroplastic/mitochondrial (942 aa).

Ser-54 carries the post-translational modification Phosphoserine. A Lon N-terminal domain is found at 79–301 (VIALPLPHKP…LTLELVKKEV (223 aa)). Residue 456 to 463 (GPTGVGKT) coordinates ATP. A disordered region spans residues 673–725 (ISDDVTTDTEETKSLAKTDLESPETSAEGSTVLTDELATGDPTESTTEQSGEV). Residues 682–692 (EETKSLAKTDL) are compositionally biased toward basic and acidic residues. A compositionally biased stretch (polar residues) spans 695-705 (PETSAEGSTVL). One can recognise a Lon proteolytic domain in the interval 756–940 (QTPVGVVMGL…EQIFELAFGY (185 aa)). Residues Ser-846 and Lys-889 contribute to the active site.

Belongs to the peptidase S16 family. As to quaternary structure, homohexamer or homoheptamer. Organized in a ring with a central cavity.

The protein localises to the mitochondrion matrix. Its subcellular location is the plastid. The protein resides in the chloroplast thylakoid membrane. The enzyme catalyses Hydrolysis of proteins in presence of ATP.. Its function is as follows. ATP-dependent serine protease that mediates the selective degradation of misfolded, unassembled or oxidatively damaged polypeptides as well as certain short-lived regulatory proteins in the mitochondrial matrix. May also have a chaperone function in the assembly of inner membrane protein complexes. Participates in the regulation of mitochondrial gene expression and in the maintenance of the integrity of the mitochondrial genome. Binds to mitochondrial DNA in a site-specific manner. The sequence is that of Lon protease homolog 4, chloroplastic/mitochondrial (LON4) from Arabidopsis thaliana (Mouse-ear cress).